The sequence spans 206 residues: Glycerol-3-phosphate acyltransferase (206 aa).

The next 6 membrane-spanning stretches (helical) occupy residues 4 to 24 (IIGI…LLVG), 55 to 75 (IIVL…PILL), 78 to 98 (ELHP…PVFA), 112 to 132 (MLLV…LTTL), 137 to 157 (MVSL…ITIG), and 158 to 178 (IVEQ…FVIF).

Belongs to the PlsY family. As to quaternary structure, probably interacts with PlsX.

Its subcellular location is the cell membrane. It catalyses the reaction an acyl phosphate + sn-glycerol 3-phosphate = a 1-acyl-sn-glycero-3-phosphate + phosphate. Its pathway is lipid metabolism; phospholipid metabolism. Catalyzes the transfer of an acyl group from acyl-phosphate (acyl-PO(4)) to glycerol-3-phosphate (G3P) to form lysophosphatidic acid (LPA). This enzyme utilizes acyl-phosphate as fatty acyl donor, but not acyl-CoA or acyl-ACP. The sequence is that of Glycerol-3-phosphate acyltransferase from Exiguobacterium sibiricum (strain DSM 17290 / CCUG 55495 / CIP 109462 / JCM 13490 / 255-15).